The primary structure comprises 48 residues: uncharacterized protein (48 aa).

The interval 1-48 (MVREKKNPSSAAVSAASVKGDAGPTQHYGGGKRTSQNQQYKKHNMGQS) is disordered. The span at 9–18 (SSAAVSAASV) shows a compositional bias: low complexity.

This is an uncharacterized protein from Bacillus subtilis (strain 168).